The primary structure comprises 1400 residues: DNA-directed RNA polymerase subunit beta' (1400 aa).

Positions 71, 73, 86, and 89 each coordinate Zn(2+). Mg(2+) contacts are provided by aspartate 462, aspartate 464, and aspartate 466. The Zn(2+) site is built by cysteine 811, cysteine 885, cysteine 892, and cysteine 895.

It belongs to the RNA polymerase beta' chain family. As to quaternary structure, the RNAP catalytic core consists of 2 alpha, 1 beta, 1 beta' and 1 omega subunit. When a sigma factor is associated with the core the holoenzyme is formed, which can initiate transcription. Mg(2+) serves as cofactor. Zn(2+) is required as a cofactor.

The enzyme catalyses RNA(n) + a ribonucleoside 5'-triphosphate = RNA(n+1) + diphosphate. DNA-dependent RNA polymerase catalyzes the transcription of DNA into RNA using the four ribonucleoside triphosphates as substrates. This chain is DNA-directed RNA polymerase subunit beta', found in Brucella melitensis biotype 1 (strain ATCC 23456 / CCUG 17765 / NCTC 10094 / 16M).